The primary structure comprises 479 residues: Aspartyl/glutamyl-tRNA(Asn/Gln) amidotransferase subunit B (479 aa).

This sequence belongs to the GatB/GatE family. GatB subfamily. As to quaternary structure, heterotrimer of A, B and C subunits.

It catalyses the reaction L-glutamyl-tRNA(Gln) + L-glutamine + ATP + H2O = L-glutaminyl-tRNA(Gln) + L-glutamate + ADP + phosphate + H(+). The catalysed reaction is L-aspartyl-tRNA(Asn) + L-glutamine + ATP + H2O = L-asparaginyl-tRNA(Asn) + L-glutamate + ADP + phosphate + 2 H(+). In terms of biological role, allows the formation of correctly charged Asn-tRNA(Asn) or Gln-tRNA(Gln) through the transamidation of misacylated Asp-tRNA(Asn) or Glu-tRNA(Gln) in organisms which lack either or both of asparaginyl-tRNA or glutaminyl-tRNA synthetases. The reaction takes place in the presence of glutamine and ATP through an activated phospho-Asp-tRNA(Asn) or phospho-Glu-tRNA(Gln). This chain is Aspartyl/glutamyl-tRNA(Asn/Gln) amidotransferase subunit B, found in Streptococcus uberis (strain ATCC BAA-854 / 0140J).